Here is a 445-residue protein sequence, read N- to C-terminus: Argininosuccinate lyase (445 aa).

It belongs to the lyase 1 family. Argininosuccinate lyase subfamily.

It is found in the cytoplasm. It catalyses the reaction 2-(N(omega)-L-arginino)succinate = fumarate + L-arginine. Its pathway is amino-acid biosynthesis; L-arginine biosynthesis; L-arginine from L-ornithine and carbamoyl phosphate: step 3/3. This Xylella fastidiosa (strain 9a5c) protein is Argininosuccinate lyase.